Reading from the N-terminus, the 351-residue chain is UDP-3-O-acylglucosamine N-acyltransferase (351 aa).

The active-site Proton acceptor is the H240.

This sequence belongs to the transferase hexapeptide repeat family. LpxD subfamily. In terms of assembly, homotrimer.

The catalysed reaction is a UDP-3-O-[(3R)-3-hydroxyacyl]-alpha-D-glucosamine + a (3R)-hydroxyacyl-[ACP] = a UDP-2-N,3-O-bis[(3R)-3-hydroxyacyl]-alpha-D-glucosamine + holo-[ACP] + H(+). It participates in bacterial outer membrane biogenesis; LPS lipid A biosynthesis. Catalyzes the N-acylation of UDP-3-O-acylglucosamine using 3-hydroxyacyl-ACP as the acyl donor. Is involved in the biosynthesis of lipid A, a phosphorylated glycolipid that anchors the lipopolysaccharide to the outer membrane of the cell. This chain is UDP-3-O-acylglucosamine N-acyltransferase, found in Methylacidiphilum infernorum (isolate V4) (Methylokorus infernorum (strain V4)).